A 553-amino-acid polypeptide reads, in one-letter code: Putative transport protein YidE (553 aa).

5 consecutive transmembrane segments (helical) span residues 4 to 24 (IALT…IGNV), 28 to 48 (GVGL…HFVS), 65 to 85 (FGLI…FFAS), 95 to 115 (LFAV…HKLF), and 158 to 178 (MSYA…MWML). RCK C-terminal domains are found at residues 191-276 (QQHE…VIGQ) and 279-361 (DTSL…VLGN). Helical transmembrane passes span 371–391 (MLPV…PVFV), 393–413 (GFPA…ALIL), 439–459 (IVLF…HTLV), 464–484 (LSWI…VGIL), 493–513 (YLTM…LAFA), and 533–553 (LVMF…WSIG).

It belongs to the AAE transporter (TC 2.A.81) family. YidE subfamily.

The protein localises to the cell membrane. The chain is Putative transport protein YidE from Escherichia coli O6:K15:H31 (strain 536 / UPEC).